A 902-amino-acid polypeptide reads, in one-letter code: MKNSFQTLKTLTTKSGTYGYYDLQELERKGVAEVSRLPFSIRVMLESLLRNEDGYQVTREDIEALARWRPDPGEINVPLKLARVILQDFTGVPAVVDLAAMRDAIKAKGGDPKRINPVVPADLVIDHSVQVDAFGTAYAFFYNVEKEYERNRERYLLLKWAQNALENFRVVPPGTGIVHQVNIEYLTKVVMTGKRDGLTLAFPDSLVGTDSHTTMVNGLGVLGWGVGGIEAEAVMLGQPYYMLAPRVVGFKLYGELPEGATATDLVLTVTEMLRKHGVVGKFVEFYGPGVAKLSTPDRATIANMAPEYGATMGFFPVDEETLNYLRQTGRPEELVELVEAYTKAVGLFRTPEAEEKVQYSEYLELDLSAVEPSLAGPKRPQDRVPLKEVKKSFLAHLTKPVKERGFGLSEDQLQRKVLVKRRDEEFELTHGSVVIAAITSCTNTSNPSVMLGAGLLAKKAVEAGLDRKPWVKTSLAPGSKVVTDYLEMSGLMPFLEALGFHLVGYGCTTCIGNSGPLPEDIAKAVEEGNLVVAAVLSGNRNFEGRINPHVKANYLASPMLVVAYALAGRMDIDFTTEPLGFDPNGKPIYLKDIWPSMEEIREAIRKTLDPELFKKEYSKVFEGDERWQALPAPTGELYQWDPESTYIQNPPFFEDLGERKVEDIRGARVLLVLGDSVTTDHISPAGAIPVKSPAGQYLISKGVKPEDFNSYGSRRGNHEVMMRGTFANIRIKNLMLDGIEGGYAKKLPEGDVDFVYNVAMRYKAEGTPLLVIAGKEYGTGSSRDWAAKGTYLLGIRAVLAESFERIHRSNLVGMGVLPLEFLPGENRETLGLTGYEVYDILGLEDLKPRKLVDIVARREDGSEVRFQAIARLDTPVEVDYYKNGGILQTVLLNMLKEAKATE.

3 residues coordinate [4Fe-4S] cluster: Cys441, Cys507, and Cys510.

This sequence belongs to the aconitase/IPM isomerase family. In terms of assembly, monomer. It depends on [4Fe-4S] cluster as a cofactor.

It carries out the reaction citrate = D-threo-isocitrate. It catalyses the reaction (2S,3R)-3-hydroxybutane-1,2,3-tricarboxylate = 2-methyl-cis-aconitate + H2O. It participates in carbohydrate metabolism; tricarboxylic acid cycle; isocitrate from oxaloacetate: step 2/2. The protein operates within organic acid metabolism; propanoate degradation. Involved in the catabolism of short chain fatty acids (SCFA) via the tricarboxylic acid (TCA)(acetyl degradation route) and probably the 2-methylcitrate cycle I (propionate degradation route). Catalyzes the reversible isomerization of citrate to isocitrate via cis-aconitate. Also able to catalyze the hydration of cis-homoaconitate to yield (R)-homocitrate, but with a lower efficiency. Could catalyze the hydration of 2-methyl-cis-aconitate to yield (2R,3S)-2-methylisocitrate. The apo form of AcnA functions as a RNA-binding regulatory protein. The protein is Aconitate hydratase A (acoA) of Thermus thermophilus (strain ATCC 27634 / DSM 579 / HB8).